A 148-amino-acid chain; its full sequence is D-aminoacyl-tRNA deacylase (148 aa).

Positions 137 to 138 match the Gly-cisPro motif, important for rejection of L-amino acids motif; that stretch reads GP.

This sequence belongs to the DTD family. Homodimer.

The protein resides in the cytoplasm. The enzyme catalyses glycyl-tRNA(Ala) + H2O = tRNA(Ala) + glycine + H(+). It catalyses the reaction a D-aminoacyl-tRNA + H2O = a tRNA + a D-alpha-amino acid + H(+). Its function is as follows. An aminoacyl-tRNA editing enzyme that deacylates mischarged D-aminoacyl-tRNAs. Also deacylates mischarged glycyl-tRNA(Ala), protecting cells against glycine mischarging by AlaRS. Acts via tRNA-based rather than protein-based catalysis; rejects L-amino acids rather than detecting D-amino acids in the active site. By recycling D-aminoacyl-tRNA to D-amino acids and free tRNA molecules, this enzyme counteracts the toxicity associated with the formation of D-aminoacyl-tRNA entities in vivo and helps enforce protein L-homochirality. This Oenococcus oeni (strain ATCC BAA-331 / PSU-1) protein is D-aminoacyl-tRNA deacylase.